The sequence spans 560 residues: Beta-glucosidase 26, peroxisomal (560 aa).

A beta-D-glucoside-binding positions include Gln33, His137, 182–183 (NE), Tyr326, Glu398, Trp450, 457–458 (EW), and Tyr466. The Proton donor role is filled by Glu183. The Nucleophile role is filled by Glu398.

This sequence belongs to the glycosyl hydrolase 1 family.

The protein resides in the peroxisome. It catalyses the reaction Hydrolysis of terminal, non-reducing beta-D-glucosyl residues with release of beta-D-glucose.. Possesses beta-glucosidase activity toward 4-methyl-umbelliferyl-beta-D-glucoside in vitro. Possesses myrosinase activity toward indol-3-yl-methylglucosinolate (I3M) and 4-methoxy-indol-3-yl-methylglucosinolate (4MO-I3M) in vivo. Component of an inducible preinvasion resistance mechanism that prevents penetration of the nonhost fungal species B.graminis and E.pisi. Involved in indole glucosinolate (IGS) activation during pattern-triggered immunity (PTI). Functions as a myrosinase for the breakdown of flg22-triggered IGS. Required for both callose deposition and glucosinolate activation during pathogen-triggered resistance. During fungal attack, required for IGS activation that mediates broad-spectrum antifungal defense. This Arabidopsis thaliana (Mouse-ear cress) protein is Beta-glucosidase 26, peroxisomal.